Reading from the N-terminus, the 402-residue chain is Phosphoglycerate kinase (402 aa).

Residues 24-26, arginine 40, 63-66, arginine 122, and arginine 155 contribute to the substrate site; these read DFN and HFGR. ATP contacts are provided by residues lysine 206, glycine 297, glutamate 328, and 358–361; that span reads GGDS.

Belongs to the phosphoglycerate kinase family. Monomer.

Its subcellular location is the cytoplasm. It catalyses the reaction (2R)-3-phosphoglycerate + ATP = (2R)-3-phospho-glyceroyl phosphate + ADP. Its pathway is carbohydrate degradation; glycolysis; pyruvate from D-glyceraldehyde 3-phosphate: step 2/5. The polypeptide is Phosphoglycerate kinase (Prochlorococcus marinus (strain MIT 9515)).